The primary structure comprises 351 residues: Delta(7)-sterol 5(6)-desaturase (351 aa).

3 helical membrane-spanning segments follow: residues 88 to 108 (LSLFLVTTVFGWLLYLIVASF), 136 to 156 (GLGAIPYMAVMTVPWFLLELH), and 173 to 193 (VRLALEALFFILFTDFGIYLL). Residues 180 to 305 (LFFILFTDFG…FTTLWDRLGG (126 aa)) enclose the Fatty acid hydroxylase domain. Positions 194 to 198 (HRWLH) match the Histidine box-1 motif. Positions 207 to 211 (HKKHH) match the Histidine box-2 motif. A helical transmembrane segment spans residues 237 to 257 (HLFPMLFPLHKVSYLVLFTFV). The Histidine box-3 motif lies at 282–286 (HTVHH).

The protein belongs to the sterol desaturase family. The cofactor is Fe cation.

The protein resides in the endoplasmic reticulum membrane. The enzyme catalyses a Delta(7)-sterol + 2 Fe(II)-[cytochrome b5] + O2 + 2 H(+) = a Delta(5),Delta(7)-sterol + 2 Fe(III)-[cytochrome b5] + 2 H2O. The protein operates within steroid metabolism; ergosterol biosynthesis; ergosterol from zymosterol: step 3/5. Its function is as follows. Catalyzes the introduction of a C-5 double bond in the B ring of ergosterol. May contribute to the regulation of ergosterol biosynthesis. This Eremothecium gossypii (strain ATCC 10895 / CBS 109.51 / FGSC 9923 / NRRL Y-1056) (Yeast) protein is Delta(7)-sterol 5(6)-desaturase (ERG3).